Reading from the N-terminus, the 228-residue chain is Sodium channel regulatory subunit beta-4 (228 aa).

Residues Met1–Ser30 form the signal peptide. The Ig-like C2-type domain maps to Leu31 to Phe148. Topologically, residues Leu31 to Val162 are extracellular. N-linked (GlcNAc...) asparagine glycosylation is found at Asn45, Asn71, and Asn113. A disulfide bond links Cys53 and Cys131. The helical transmembrane segment at Thr163–Val183 threads the bilayer. Topologically, residues Lys184 to Val228 are cytoplasmic. Positions Lys198–Val228 are disordered. The segment covering Val203–Asn213 has biased composition (polar residues). Positions Lys219–Val228 are enriched in basic and acidic residues.

Belongs to the sodium channel auxiliary subunit SCN4B (TC 8.A.17) family. As to quaternary structure, a voltage-gated sodium (Nav) channel consists of an ion-conducting pore-forming alpha subunit functional on its own that is regulated by one or more beta subunits. The beta subunit SCN4B is disulfide-linked to the pore-forming alpha subunit. Interacts with SCN1A; regulatory subunit of SCN1A/Nav1.1. Interacts with SCN2A; regulatory subunit of SCN2A/Nav1.2. Post-translationally, contains an interchain disulfide bond with SCN2A.

It is found in the cell membrane. Functionally, regulatory subunit of multiple voltage-gated sodium (Nav) channels directly mediating the depolarization of excitable membranes. Navs, also called VGSCs (voltage-gated sodium channels) or VDSCs (voltage-dependent sodium channels), operate by switching between closed and open conformations depending on the voltage difference across the membrane. In the open conformation they allow Na(+) ions to selectively pass through the pore, along their electrochemical gradient. The influx of Na+ ions provokes membrane depolarization, initiating the propagation of electrical signals throughout cells and tissues. The accessory beta subunits participate in localization and functional modulation of the Nav channels. Modulates the activity of SCN1A/Nav1.1. Modulates the activity of SCN2A/Nav1.2. This is Sodium channel regulatory subunit beta-4 from Bos taurus (Bovine).